Consider the following 941-residue polypeptide: Isoleucine--tRNA ligase (941 aa).

The 'HIGH' region signature appears at 59–69; sequence PYANGNIHIGH. Residue glutamate 562 participates in L-isoleucyl-5'-AMP binding. A 'KMSKS' region motif is present at residues 603-607; that stretch reads KMSKS. Residue lysine 606 coordinates ATP. Cysteine 904, cysteine 907, cysteine 924, and cysteine 927 together coordinate Zn(2+).

The protein belongs to the class-I aminoacyl-tRNA synthetase family. IleS type 1 subfamily. As to quaternary structure, monomer. Zn(2+) is required as a cofactor.

It is found in the cytoplasm. The enzyme catalyses tRNA(Ile) + L-isoleucine + ATP = L-isoleucyl-tRNA(Ile) + AMP + diphosphate. Its function is as follows. Catalyzes the attachment of isoleucine to tRNA(Ile). As IleRS can inadvertently accommodate and process structurally similar amino acids such as valine, to avoid such errors it has two additional distinct tRNA(Ile)-dependent editing activities. One activity is designated as 'pretransfer' editing and involves the hydrolysis of activated Val-AMP. The other activity is designated 'posttransfer' editing and involves deacylation of mischarged Val-tRNA(Ile). The polypeptide is Isoleucine--tRNA ligase (Haemophilus influenzae (strain ATCC 51907 / DSM 11121 / KW20 / Rd)).